We begin with the raw amino-acid sequence, 468 residues long: H(+)/Cl(-) exchange transporter ClcA (468 aa).

The Cytoplasmic segment spans residues M1–P30. Residues F31–K67 form a helical membrane-spanning segment. At S68–L74 the chain is on the periplasmic side. The chain crosses the membrane as a helical span at residues P75–F98. Residues G104–P108 carry the Selectivity filter part_1 motif. Chloride is bound at residue S105. Residues I107–M114 constitute an intramembrane region (helical). The Cytoplasmic segment spans residues D115–R121. A run of 2 helical transmembrane segments spans residues W122–S139 and E146–F164. The Selectivity filter part_2 motif lies at G144–P148. Topologically, residues R165–S174 are cytoplasmic. Intramembrane regions (helical) lie at residues L175–A187 and P191–I199. Residues E200 to S212 lie on the Cytoplasmic side of the membrane. Residues V213–I230 form a helical membrane-spanning segment. The Periplasmic segment spans residues N231–L250. A helical membrane pass occupies residues G251–V279. Topologically, residues K280–D285 are cytoplasmic. The helical transmembrane segment at R286–V307 threads the bilayer. The Periplasmic segment spans residues P308–G327. 2 helical membrane passes run A328–G347 and G353–K374. The Selectivity filter part_3 motif lies at G353 to P357. I354 and F355 together coordinate chloride. Topologically, residues V375–P384 are periplasmic. Residues G385–T399 constitute an intramembrane region (helical). The note=Loop between two helices intramembrane region spans V400–A402. An intramembrane region (helical) is located at residues P403–T414. The note=Loop between two helices intramembrane region spans N415–L419. A helical transmembrane segment spans residues I420–L436. Topologically, residues L437 to S468 are cytoplasmic. Y443 contacts chloride.

Belongs to the chloride channel (TC 2.A.49) family. ClcA subfamily. Homodimer.

It localises to the cell inner membrane. It catalyses the reaction 2 chloride(in) + H(+)(out) = 2 chloride(out) + H(+)(in). Proton-coupled chloride transporter. Functions as antiport system and exchanges two chloride ions for 1 proton. Probably acts as an electrical shunt for an outwardly-directed proton pump that is linked to amino acid decarboxylation, as part of the extreme acid resistance (XAR) response. The sequence is that of H(+)/Cl(-) exchange transporter ClcA from Vibrio cholerae serotype O1 (strain ATCC 39541 / Classical Ogawa 395 / O395).